Reading from the N-terminus, the 123-residue chain is ATP synthase epsilon chain (123 aa).

The protein belongs to the ATPase epsilon chain family. As to quaternary structure, F-type ATPases have 2 components, CF(1) - the catalytic core - and CF(0) - the membrane proton channel. CF(1) has five subunits: alpha(3), beta(3), gamma(1), delta(1), epsilon(1). CF(0) has three main subunits: a, b and c.

Its subcellular location is the cell membrane. Functionally, produces ATP from ADP in the presence of a proton gradient across the membrane. The protein is ATP synthase epsilon chain of Corynebacterium diphtheriae (strain ATCC 700971 / NCTC 13129 / Biotype gravis).